Consider the following 117-residue polypeptide: Large ribosomal subunit protein uL18 (117 aa).

The protein belongs to the universal ribosomal protein uL18 family. Part of the 50S ribosomal subunit; part of the 5S rRNA/L5/L18/L25 subcomplex. Contacts the 5S and 23S rRNAs.

In terms of biological role, this is one of the proteins that bind and probably mediate the attachment of the 5S RNA into the large ribosomal subunit, where it forms part of the central protuberance. This chain is Large ribosomal subunit protein uL18, found in Vibrio cholerae serotype O1 (strain ATCC 39541 / Classical Ogawa 395 / O395).